The following is a 158-amino-acid chain: F(420)H(2) dehydrogenase subunit C (158 aa).

Belongs to the complex I 30 kDa subunit family. The FPO complex is composed of at least 13 different subunits.

Its subcellular location is the cell membrane. It catalyses the reaction methanophenazine + reduced coenzyme F420-(gamma-L-Glu)(n) = dihydromethanophenazine + oxidized coenzyme F420-(gamma-L-Glu)(n) + H(+). Component of the F(420)H(2) dehydrogenase (FPO complex) which is part of the energy-conserving F(420)H(2):heterodisulfide oxidoreductase system. The membrane-bound electron transfer system of the complex plays an important role in the metabolism of methylotrophic methanogens when the organisms grow on methanol or methylamines. Catalyzes the oxidation of methanophenazine to dihydromethanophenazine. It shuttles electrons from F(420)H(2), via FAD and iron-sulfur (Fe-S) centers, to methanophenazine (an electron carrier in the membrane). It couples the redox reaction to proton translocation (for every two electrons transferred, two hydrogen ions are translocated across the cytoplasmic membrane), and thus conserves the redox energy in a proton gradient. It also catalyzes the oxidation of F(420)H(2) with quinones such as 2,3-dimethyl-1,4-naphthoquinone, 2-methyl-1,4-naphthoquinone and tetramethyl-p-benzoquinone. The polypeptide is F(420)H(2) dehydrogenase subunit C (fpoC) (Methanosarcina mazei (strain ATCC BAA-159 / DSM 3647 / Goe1 / Go1 / JCM 11833 / OCM 88) (Methanosarcina frisia)).